We begin with the raw amino-acid sequence, 284 residues long: Diaminopimelate epimerase (284 aa).

Asparagine 20, glutamine 53, and asparagine 73 together coordinate substrate. Cysteine 82 serves as the catalytic Proton donor. Substrate contacts are provided by residues glycine 83 to asparagine 84, asparagine 167, asparagine 200, and glutamate 218 to arginine 219. The active-site Proton acceptor is the cysteine 227. Substrate is bound at residue glycine 228 to serine 229.

Belongs to the diaminopimelate epimerase family. Homodimer.

It is found in the cytoplasm. The catalysed reaction is (2S,6S)-2,6-diaminopimelate = meso-2,6-diaminopimelate. The protein operates within amino-acid biosynthesis; L-lysine biosynthesis via DAP pathway; DL-2,6-diaminopimelate from LL-2,6-diaminopimelate: step 1/1. Its function is as follows. Catalyzes the stereoinversion of LL-2,6-diaminopimelate (L,L-DAP) to meso-diaminopimelate (meso-DAP), a precursor of L-lysine and an essential component of the bacterial peptidoglycan. The chain is Diaminopimelate epimerase from Xanthomonas oryzae pv. oryzae (strain MAFF 311018).